We begin with the raw amino-acid sequence, 192 residues long: Peptidyl-tRNA hydrolase (192 aa).

Tyr-17 lines the tRNA pocket. His-22 functions as the Proton acceptor in the catalytic mechanism. Residues Phe-67, Asn-69, and Asn-115 each contribute to the tRNA site.

It belongs to the PTH family. Monomer.

It is found in the cytoplasm. It carries out the reaction an N-acyl-L-alpha-aminoacyl-tRNA + H2O = an N-acyl-L-amino acid + a tRNA + H(+). Functionally, hydrolyzes ribosome-free peptidyl-tRNAs (with 1 or more amino acids incorporated), which drop off the ribosome during protein synthesis, or as a result of ribosome stalling. In terms of biological role, catalyzes the release of premature peptidyl moieties from peptidyl-tRNA molecules trapped in stalled 50S ribosomal subunits, and thus maintains levels of free tRNAs and 50S ribosomes. This is Peptidyl-tRNA hydrolase from Methylobacillus flagellatus (strain ATCC 51484 / DSM 6875 / VKM B-1610 / KT).